A 1253-amino-acid chain; its full sequence is Methionine synthase (1253 aa).

One can recognise a Hcy-binding domain in the interval 6-326 (QDEIEAILRK…DHIREIAEAV (321 aa)). Zn(2+) is bound by residues Cys-248, Cys-311, and Cys-312. The region spanning 359 to 620 (FVNIGERCNV…IHKDLLQLCE (262 aa)) is the Pterin-binding domain. Residues 370–372 (GSK), Asp-437, Asn-458, Asp-525, Asn-567, Arg-573, and Arg-579 each bind (6S)-5,6,7,8-tetrahydrofolate. In terms of domain architecture, B12-binding N-terminal spans 650 to 747 (QTDEWRNGSI…FMEKEREEAR (98 aa)). Methylcob(III)alamin contacts are provided by residues Glu-697, 770-774 (GDVHD), His-773, Ser-818, Thr-822, and Ala-874. In terms of domain architecture, B12-binding spans 760-895 (QGTIVLATVK…DENLKDDYFE (136 aa)). Residues 911 to 1253 (SLKERKYLPL…LGPILGYDTD (343 aa)) form the AdoMet activation domain. S-adenosyl-L-methionine-binding positions include Asp-962, Arg-1160, and 1215–1216 (YF). Position 1252 is a phosphothreonine (Thr-1252).

Belongs to the vitamin-B12 dependent methionine synthase family. In terms of assembly, monomer. Dimer. Forms a multiprotein complex with MMACHC, MMADHC and MTRR. It depends on methylcob(III)alamin as a cofactor. Zn(2+) is required as a cofactor.

It localises to the cytoplasm. The enzyme catalyses (6S)-5-methyl-5,6,7,8-tetrahydrofolate + L-homocysteine = (6S)-5,6,7,8-tetrahydrofolate + L-methionine. The protein operates within amino-acid biosynthesis; L-methionine biosynthesis via de novo pathway; L-methionine from L-homocysteine (MetH route): step 1/1. Functionally, catalyzes the transfer of a methyl group from methylcob(III)alamin (MeCbl) to homocysteine, yielding enzyme-bound cob(I)alamin and methionine in the cytosol. MeCbl is an active form of cobalamin (vitamin B12) used as a cofactor for methionine biosynthesis. Cob(I)alamin form is regenerated to MeCbl by a transfer of a methyl group from 5-methyltetrahydrofolate. The processing of cobalamin in the cytosol occurs in a multiprotein complex composed of at least MMACHC, MMADHC, MTRR (methionine synthase reductase) and MTR which may contribute to shuttle safely and efficiently cobalamin towards MTR in order to produce methionine. The polypeptide is Methionine synthase (Mtr) (Rattus norvegicus (Rat)).